We begin with the raw amino-acid sequence, 211 residues long: N-(5'-phosphoribosyl)anthranilate isomerase (211 aa).

This sequence belongs to the TrpF family.

It carries out the reaction N-(5-phospho-beta-D-ribosyl)anthranilate = 1-(2-carboxyphenylamino)-1-deoxy-D-ribulose 5-phosphate. It functions in the pathway amino-acid biosynthesis; L-tryptophan biosynthesis; L-tryptophan from chorismate: step 3/5. The chain is N-(5'-phosphoribosyl)anthranilate isomerase from Chromohalobacter salexigens (strain ATCC BAA-138 / DSM 3043 / CIP 106854 / NCIMB 13768 / 1H11).